A 131-amino-acid chain; its full sequence is Transcription antitermination protein NusB (131 aa).

It belongs to the NusB family.

In terms of biological role, involved in transcription antitermination. Required for transcription of ribosomal RNA (rRNA) genes. Binds specifically to the boxA antiterminator sequence of the ribosomal RNA (rrn) operons. The polypeptide is Transcription antitermination protein NusB (Campylobacter concisus (strain 13826)).